A 179-amino-acid polypeptide reads, in one-letter code: Stathmin-2 (179 aa).

The tract at residues 1 to 26 is membrane attachment; that stretch reads MAKTAMAYKEKMKELSMLSLICSCFY. At serine 16 the chain carries Phosphoserine. S-palmitoyl cysteine attachment occurs at residues cysteine 22 and cysteine 24. Residues 38–179 enclose the SLD domain; the sequence is DDMEVKQINK…NKELQVELSG (142 aa). The segment at 39–96 is regulatory/phosphorylation domain; that stretch reads DMEVKQINKRASGQAFELILKPPSPISEAPRTLASPKKKDLSLEEIQKKLEAAEERRK. A phosphoserine mark is found at serine 50, serine 62, serine 73, and serine 97. Residues 75–179 adopt a coiled-coil conformation; it reads KKKDLSLEEI…NKELQVELSG (105 aa).

This sequence belongs to the stathmin family. Interacts with MAPK8. Interacts with ITM2C. Interacts with KIFBP. Interacts (via the N-terminal region) with CIB1 (via C-terminal region); the interaction is direct, occurs in a calcium-dependent manner and attenuates the neurite outgrowth inhibition of STMN2. In terms of processing, sumoylated. Phosphorylated mostly by MAPK8, but also by MAPK9 and MAPK10 in the developing brain cortex. Post-translationally, N-terminal palmitoylation promotes specific anchoring to the cytosolic leaflet of Golgi membranes and subsequent vesicular trafficking along dendrites and axons. Neuronal Stathmins are substrates for palmitoyltransferases ZDHHC3, ZDHHC7 and ZDHHC15. In terms of tissue distribution, neuron specific.

The protein localises to the cytoplasm. It is found in the perinuclear region. Its subcellular location is the cell projection. The protein resides in the growth cone. It localises to the membrane. The protein localises to the axon. It is found in the golgi apparatus. Its subcellular location is the endosome. The protein resides in the lamellipodium. Regulator of microtubule stability. When phosphorylated by MAPK8, stabilizes microtubules and consequently controls neurite length in cortical neurons. In the developing brain, negatively regulates the rate of exit from multipolar stage and retards radial migration from the ventricular zone. The polypeptide is Stathmin-2 (STMN2) (Homo sapiens (Human)).